The sequence spans 752 residues: Cytosolic phospholipase A2 (752 aa).

Positions 1–178 (MSFIDPYQHI…MKKLLGPKKS (178 aa)) are phospholipid binding. S2 is subject to Phosphoserine. The C2 domain maps to 6–122 (PYQHIIVEHQ…KVGEKKEVPF (117 aa)). Ca(2+)-binding residues include D40, T41, D43, N65, D93, A94, and N95. Residues 140–740 (SCPDLRFSMA…SNVEARKFFN (601 aa)) enclose the PLA2c domain. S228 acts as the Nucleophile in catalysis. Phosphothreonine is present on T268. The disordered stretch occupies residues 427–457 (KHIVSNDSSDSDDEAQGPKGTENEDAEREYQ). S434, S435, and S437 each carry phosphoserine. S505 is modified (phosphoserine; by MAPK). Phosphoserine is present on residues S511 and S515. K541 is covalently cross-linked (Glycyl lysine isopeptide (Lys-Gly) (interchain with G-Cter in SUMO2)). D549 acts as the Proton acceptor in catalysis. A Glycyl lysine isopeptide (Lys-Gly) (interchain with G-Cter in SUMO2) cross-link involves residue K606. A phosphoserine mark is found at S727 and S729.

In terms of assembly, interacts with KAT5. Phosphorylated at both Ser-505 and Ser-727 in response to mitogenic stimuli. In terms of tissue distribution, in brain tissue, expressed in low levels in olfactory mitral and granule cells, in hippocampal pyramidal cells and in dentate and cerebellar granule cells.

It localises to the cytoplasm. Its subcellular location is the golgi apparatus membrane. The protein resides in the nucleus envelope. The catalysed reaction is a 1,2-diacyl-sn-glycero-3-phosphocholine + H2O = a 1-acyl-sn-glycero-3-phosphocholine + a fatty acid + H(+). It catalyses the reaction a 1-O-alkyl-2-acyl-sn-glycero-3-phosphocholine + H2O = a 1-O-alkyl-sn-glycero-3-phosphocholine + a fatty acid + H(+). The enzyme catalyses a 1-acyl-sn-glycero-3-phosphocholine + H2O = sn-glycerol 3-phosphocholine + a fatty acid + H(+). It carries out the reaction 1-hexadecanoyl-2-(5Z,8Z,11Z,14Z-eicosatetraenoyl)-sn-glycero-3-phosphocholine + H2O = 1-hexadecanoyl-sn-glycero-3-phosphocholine + (5Z,8Z,11Z,14Z)-eicosatetraenoate + H(+). The catalysed reaction is 1,2-di-(5Z,8Z,11Z,14Z-eicosatetraenoyl)-sn-glycero-3-phosphocholine + H2O = 1-(5Z,8Z,11Z,14Z-eicosatetraenoyl)-sn-glycero-3-phosphocholine + (5Z,8Z,11Z,14Z)-eicosatetraenoate + H(+). It catalyses the reaction 1-octadecanoyl-2-(5Z,8Z,11Z,14Z-eicosatetraenoyl)-sn-glycero-3-phosphocholine + H2O = 1-octadecanoyl-sn-glycero-3-phosphocholine + (5Z,8Z,11Z,14Z)-eicosatetraenoate + H(+). The enzyme catalyses 1-hexadecanoyl-2-(9Z,12Z-octadecadienoyl)-sn-glycero-3-phosphocholine + H2O = (9Z,12Z)-octadecadienoate + 1-hexadecanoyl-sn-glycero-3-phosphocholine + H(+). It carries out the reaction 1-octadecanoyl-2-(9Z,12Z,15Z-octadecatrienoyl)-sn-glycero-3-phosphocholine + H2O = (9Z,12Z,15Z)-octadecatrienoate + 1-octadecanoyl-sn-glycero-3-phosphocholine + H(+). The catalysed reaction is 1-(5Z,8Z,11Z,14Z-eicosatetraenoyl)-2-hexadecanoyl-sn-glycero-3-phosphocholine + H2O = 1-(5Z,8Z,11Z,14Z-eicosatetraenoyl)-sn-glycero-3-phosphocholine + hexadecanoate + H(+). It catalyses the reaction 1-O-hexadecyl-2-(5Z,8Z,11Z,14Z)-eicosatetraenoyl-sn-glycero-3-phosphocholine + H2O = 1-O-hexadecyl-sn-glycero-3-phosphocholine + (5Z,8Z,11Z,14Z)-eicosatetraenoate + H(+). The enzyme catalyses 1,2-di-(9Z-octadecenoyl)-sn-glycero-3-phospho-(1'-sn-glycerol) + H2O = 1-(9Z-octadecenoyl)-sn-glycero-3-phospho-(1'-sn-glycerol) + (9Z)-octadecenoate + H(+). It carries out the reaction 1-octadecanoyl-2-(5Z,8Z,11Z,14Z-eicosatetraenoyl)-sn-glycero-3-phosphate + H2O = 1-octadecanoyl-sn-glycero-3-phosphate + (5Z,8Z,11Z,14Z)-eicosatetraenoate + H(+). The catalysed reaction is 1-hexadecanoyl-sn-glycero-3-phosphocholine + H2O = sn-glycerol 3-phosphocholine + hexadecanoate + H(+). It catalyses the reaction 2-(prostaglandin E2)-sn-glycero-3-phosphoethanolamine + H2O = sn-glycero-3-phosphoethanolamine + prostaglandin E2 + H(+). The enzyme catalyses 2-[(15S)-hydroxy-(5Z,8Z,11Z,13E)-eicosatetraenoyl]-sn-glycero-3-phosphocholine + H2O = (15S)-hydroxy-(5Z,8Z,11Z,13E)-eicosatetraenoate + sn-glycerol 3-phosphocholine + H(+). It carries out the reaction 2-[(15R)-hydroxy-(5Z,8Z,11Z,13E)-eicosatetraenoyl]-sn-glycero-3-phosphocholine + H2O = (15R)-hydroxy-(5Z,8Z,11Z,13E)-eicosatetraenoate + sn-glycerol 3-phosphocholine + H(+). The catalysed reaction is 2-(prostaglandin E2)-sn-glycero-3-phosphocholine + H2O = prostaglandin E2 + sn-glycerol 3-phosphocholine + H(+). It catalyses the reaction 2-[(11R)-hydroxy-(5Z,8Z,12E,14Z)-eicosatetraenoyl]-sn-glycero-3-phosphocholine + H2O = (11R)-hydroxy-(5Z,8Z,12E,14Z)-eicosatetraenoate + sn-glycerol 3-phosphocholine + H(+). The enzyme catalyses 1-(5Z,8Z,11Z,14Z-eicosatetraenoyl)-2-O-hexadecyl-sn-glycero-3-phosphocholine + H2O = 2-O-hexadecyl-sn-glycero-3-phosphocholine + (5Z,8Z,11Z,14Z)-eicosatetraenoate + H(+). It carries out the reaction 1-octadecanoyl-2-(5Z,8Z,11Z,14Z-eicosatetraenoyl)-sn-glycero-3-phosphocholine + glycerol = 1-(5Z,8Z,11Z,14Z-eicosatetraenoyl)-glycerol + 1-octadecanoyl-sn-glycero-3-phosphocholine. The catalysed reaction is 1-octadecanoyl-2-(9Z,12Z,15Z-octadecatrienoyl)-sn-glycero-3-phosphocholine + glycerol = 1-(9Z,12Z,15Z-octadecatrienoyl)-glycerol + 1-octadecanoyl-sn-glycero-3-phosphocholine. The protein operates within lipid metabolism; arachidonate metabolism. It participates in membrane lipid metabolism; glycerophospholipid metabolism. Its pathway is lipid metabolism; prostaglandin biosynthesis. It functions in the pathway lipid metabolism; leukotriene B4 biosynthesis. With respect to regulation, activated by cytosolic calcium, which is necessary for binding to membrane lipids. Activated by phosphorylation in response to mitogenic stimuli. Functionally, has primarily calcium-dependent phospholipase and lysophospholipase activities, with a major role in membrane lipid remodeling and biosynthesis of lipid mediators of the inflammatory response. Plays an important role in embryo implantation and parturition through its ability to trigger prostanoid production. Preferentially hydrolyzes the ester bond of the fatty acyl group attached at sn-2 position of phospholipids (phospholipase A2 activity). Selectively hydrolyzes sn-2 arachidonoyl group from membrane phospholipids, providing the precursor for eicosanoid biosynthesis via the cyclooxygenase pathway. In an alternative pathway of eicosanoid biosynthesis, hydrolyzes sn-2 fatty acyl chain of eicosanoid lysophopholipids to release free bioactive eicosanoids. Hydrolyzes the ester bond of the fatty acyl group attached at sn-1 position of phospholipids (phospholipase A1 activity) only if an ether linkage rather than an ester linkage is present at the sn-2 position. This hydrolysis is not stereospecific. Has calcium-independent phospholipase A2 and lysophospholipase activities in the presence of phosphoinositides. Has O-acyltransferase activity. Catalyzes the transfer of fatty acyl chains from phospholipids to a primary hydroxyl group of glycerol (sn-1 or sn-3), potentially contributing to monoacylglycerol synthesis. This chain is Cytosolic phospholipase A2 (Pla2g4a), found in Rattus norvegicus (Rat).